The following is a 423-amino-acid chain: Putative gustatory receptor 97a (423 aa).

At M1 to Q31 the chain is on the cytoplasmic side. The helical transmembrane segment at L32–G52 threads the bilayer. Topologically, residues R53 to K65 are extracellular. Residues G66–I86 traverse the membrane as a helical segment. Over Y87–D99 the chain is Cytoplasmic. Residues T100 to W120 form a helical membrane-spanning segment. Residues E121–A152 lie on the Extracellular side of the membrane. A helical transmembrane segment spans residues F153–L173. At Y174–N200 the chain is on the cytoplasmic side. A helical transmembrane segment spans residues Q201–N221. The Extracellular portion of the chain corresponds to R222–R278. The chain crosses the membrane as a helical span at residues F279–C299. Topologically, residues Y300–D317 are cytoplasmic. Residues L318 to V338 form a helical membrane-spanning segment. The Extracellular portion of the chain corresponds to A339–K423. N-linked (GlcNAc...) asparagine glycans are attached at residues N343 and N393.

It belongs to the insect chemoreceptor superfamily. Gustatory receptor (GR) family. Gr22e subfamily. In larvae, is expressed in neurons of the terminal external chemosensory organ.

The protein resides in the cell membrane. Its function is as follows. Probable gustatory receptor which mediates acceptance or avoidance behavior, depending on its substrates. The chain is Putative gustatory receptor 97a (Gr97a) from Drosophila melanogaster (Fruit fly).